A 177-amino-acid chain; its full sequence is Large ribosomal subunit protein uL6 (177 aa).

The protein belongs to the universal ribosomal protein uL6 family. In terms of assembly, part of the 50S ribosomal subunit.

Its function is as follows. This protein binds to the 23S rRNA, and is important in its secondary structure. It is located near the subunit interface in the base of the L7/L12 stalk, and near the tRNA binding site of the peptidyltransferase center. The sequence is that of Large ribosomal subunit protein uL6 from Acidovorax ebreus (strain TPSY) (Diaphorobacter sp. (strain TPSY)).